A 372-amino-acid polypeptide reads, in one-letter code: GTPase Obg (372 aa).

Positions 1 to 159 (MKFIDEARIE…RMLKLELKVL (159 aa)) constitute an Obg domain. The tract at residues 128–147 (LHFKSSTNRAPRQKTDGKPG) is disordered. Positions 160 to 334 (ADVGLLGMPN…LVYAIHDYLV (175 aa)) constitute an OBG-type G domain. Residues 166-173 (GMPNAGKS), 191-195 (FTTLA), 213-216 (DIPG), 284-287 (NKLD), and 315-317 (SAL) each bind GTP. Positions 173 and 193 each coordinate Mg(2+).

Belongs to the TRAFAC class OBG-HflX-like GTPase superfamily. OBG GTPase family. As to quaternary structure, monomer. Mg(2+) serves as cofactor.

It localises to the cytoplasm. Its function is as follows. An essential GTPase which binds GTP, GDP and possibly (p)ppGpp with moderate affinity, with high nucleotide exchange rates and a fairly low GTP hydrolysis rate. Plays a role in control of the cell cycle, stress response, ribosome biogenesis and in those bacteria that undergo differentiation, in morphogenesis control. This chain is GTPase Obg, found in Burkholderia pseudomallei (strain 668).